A 310-amino-acid polypeptide reads, in one-letter code: Transaldolase (310 aa).

Lys124 (schiff-base intermediate with substrate) is an active-site residue.

The protein belongs to the transaldolase family. Type 1 subfamily. As to quaternary structure, homodimer.

The protein resides in the cytoplasm. It carries out the reaction D-sedoheptulose 7-phosphate + D-glyceraldehyde 3-phosphate = D-erythrose 4-phosphate + beta-D-fructose 6-phosphate. It functions in the pathway carbohydrate degradation; pentose phosphate pathway; D-glyceraldehyde 3-phosphate and beta-D-fructose 6-phosphate from D-ribose 5-phosphate and D-xylulose 5-phosphate (non-oxidative stage): step 2/3. Functionally, transaldolase is important for the balance of metabolites in the pentose-phosphate pathway. This Teredinibacter turnerae (strain ATCC 39867 / T7901) protein is Transaldolase.